An 83-amino-acid chain; its full sequence is Sulfur carrier protein TusA (83 aa).

C19 serves as the catalytic Cysteine persulfide intermediate.

Belongs to the sulfur carrier protein TusA family.

The protein localises to the cytoplasm. In terms of biological role, sulfur carrier protein which probably makes part of a sulfur-relay system. The sequence is that of Sulfur carrier protein TusA from Aliivibrio salmonicida (strain LFI1238) (Vibrio salmonicida (strain LFI1238)).